An 85-amino-acid chain; its full sequence is Putative defensin-like protein 79 (85 aa).

A signal peptide spans 1–31 (MKSEKSADAYGTYFLLISTIFLLFIARQASS). 4 cysteine pairs are disulfide-bonded: Cys37–Cys69, Cys44–Cys60, Cys47–Cys67, and Cys51–Cys68.

Belongs to the DEFL family.

It is found in the secreted. The polypeptide is Putative defensin-like protein 79 (Arabidopsis thaliana (Mouse-ear cress)).